A 1308-amino-acid polypeptide reads, in one-letter code: Transposon TX1 uncharacterized 149 kDa protein (1308 aa).

The 272-residue stretch at 494-765 folds into the Reverse transcriptase domain; sequence EAFKKGELPL…KIIKYLGVYL (272 aa).

In Xenopus laevis (African clawed frog), this protein is Transposon TX1 uncharacterized 149 kDa protein.